A 775-amino-acid chain; its full sequence is E3 ubiquitin-protein ligase UHRF1 (775 aa).

The region spanning 1 to 77 (MWIQVRTMDG…IVQLLVRQIP (77 aa)) is the Ubiquitin-like domain. The disordered stretch occupies residues 81-128 (PTKDKECGISDADSGCGSGQGESDKNSSCGEGATDVDGQPAGINSENV). 2 tudor-like regions span residues 131–207 (SLYK…LRAR) and 214–283 (DLKV…IEEP). The tract at residues 293–301 (PQKRQNGPE) is linker. The PHD-type zinc-finger motif lies at 299-366 (GPECKHCKDN…DWYCPDCRND (68 aa)). Histone H3R2me0 binding regions lie at residues 333-337 (CDECD) and 353-355 (PQD). The YDG domain maps to 419 to 582 (GPIPGVPVGT…FLVWRYLLRR (164 aa)). Residues 445–446 (HV) form a required to promote base flipping region. DNA contacts are provided by residues 463–464 (AG) and Asp-469. Required for formation of a 5-methylcytosine-binding pocket stretches follow at residues 466-469 (YEDD) and 478-481 (YTGS). Basic and acidic residues predominate over residues 616 to 628 (ASKEREKENKTED). The interval 616-655 (ASKEREKENKTEDELSESPSKGKRKRNSAGSGLSDAKSTP) is disordered. Residues 706–745 (CICCQEVVYEPITTECHHNICKGCLDRSFKALVHNCPACR) form an RING-type zinc finger.

The protein resides in the nucleus. It catalyses the reaction S-ubiquitinyl-[E2 ubiquitin-conjugating enzyme]-L-cysteine + [acceptor protein]-L-lysine = [E2 ubiquitin-conjugating enzyme]-L-cysteine + N(6)-ubiquitinyl-[acceptor protein]-L-lysine.. It participates in protein modification; protein ubiquitination. Functionally, multidomain protein that acts as a key epigenetic regulator by bridging DNA methylation and chromatin modification. Specifically recognizes and binds hemimethylated DNA at replication forks via its YDG domain and recruits dnmt1 methyltransferase to ensure faithful propagation of the DNA methylation patterns through DNA replication. In addition to its role in maintenance of DNA methylation, also plays a key role in chromatin modification: through its tudor-like regions and PHD-type zinc fingers, specifically recognizes and binds histone H3 trimethylated at 'Lys-9' (H3K9me3) and unmethylated at 'Arg-2' (H3R2me0), respectively, and recruits chromatin proteins. Enriched in pericentric heterochromatin where it recruits different chromatin modifiers required for this chromatin replication. Also localizes to euchromatic regions where it negatively regulates transcription possibly by impacting DNA methylation and histone modifications. Has E3 ubiquitin-protein ligase activity by mediating the ubiquitination of target proteins. However, it is still unclear how E3 ubiquitin-protein ligase activity is related to its role in chromatin in vivo. The protein is E3 ubiquitin-protein ligase UHRF1 (uhrf1) of Xenopus tropicalis (Western clawed frog).